A 1033-amino-acid chain; its full sequence is Error-prone DNA polymerase (1033 aa).

The protein belongs to the DNA polymerase type-C family. DnaE2 subfamily.

It is found in the cytoplasm. The catalysed reaction is DNA(n) + a 2'-deoxyribonucleoside 5'-triphosphate = DNA(n+1) + diphosphate. Functionally, DNA polymerase involved in damage-induced mutagenesis and translesion synthesis (TLS). It is not the major replicative DNA polymerase. The protein is Error-prone DNA polymerase of Teredinibacter turnerae (strain ATCC 39867 / T7901).